The sequence spans 509 residues: Maturase K (509 aa).

This sequence belongs to the intron maturase 2 family. MatK subfamily.

The protein localises to the plastid. It is found in the chloroplast. Functionally, usually encoded in the trnK tRNA gene intron. Probably assists in splicing its own and other chloroplast group II introns. This chain is Maturase K, found in Citrus sinensis (Sweet orange).